Here is a 316-residue protein sequence, read N- to C-terminus: Beta-ketoacyl-[acyl-carrier-protein] synthase III 1 (316 aa).

Catalysis depends on residues Cys-112 and His-243. An ACP-binding region spans residues 244-248 (QANYR). Residue Asn-273 is part of the active site.

The protein belongs to the thiolase-like superfamily. FabH family. As to quaternary structure, homodimer.

Its subcellular location is the cytoplasm. The enzyme catalyses malonyl-[ACP] + acetyl-CoA + H(+) = 3-oxobutanoyl-[ACP] + CO2 + CoA. Its pathway is lipid metabolism; fatty acid biosynthesis. Its function is as follows. Catalyzes the condensation reaction of fatty acid synthesis by the addition to an acyl acceptor of two carbons from malonyl-ACP. Catalyzes the first condensation reaction which initiates fatty acid synthesis and may therefore play a role in governing the total rate of fatty acid production. Possesses both acetoacetyl-ACP synthase and acetyl transacylase activities. Its substrate specificity determines the biosynthesis of branched-chain and/or straight-chain of fatty acids. The chain is Beta-ketoacyl-[acyl-carrier-protein] synthase III 1 from Vibrio vulnificus (strain CMCP6).